Consider the following 218-residue polypeptide: Very-long-chain (3R)-3-hydroxyacyl-CoA dehydratase (218 aa).

Residues M1–S6 lie on the Cytoplasmic side of the membrane. The helical transmembrane segment at I7–F29 threads the bilayer. Over F30–T38 the chain is Lumenal. Residues F39–L61 form a helical membrane-spanning segment. Topologically, residues L62 to N67 are cytoplasmic. A helical membrane pass occupies residues G68–I87. Residues T88–K96 are Lumenal-facing. A helical transmembrane segment spans residues Y97–Y116. Over D117–W136 the chain is Cytoplasmic. Residues W137–F159 traverse the membrane as a helical segment. Active-site residues include Y141 and E148. The Lumenal segment spans residues E160 to H178. A helical transmembrane segment spans residues F179–L201. The Cytoplasmic segment spans residues W202–N218.

This sequence belongs to the very long-chain fatty acids dehydratase HACD family.

The protein resides in the endoplasmic reticulum membrane. The catalysed reaction is a very-long-chain (3R)-3-hydroxyacyl-CoA = a very-long-chain (2E)-enoyl-CoA + H2O. It carries out the reaction (3R)-hydroxyhexadecanoyl-CoA = (2E)-hexadecenoyl-CoA + H2O. The protein operates within lipid metabolism; fatty acid biosynthesis. Functionally, catalyzes the third of the four reactions of the long-chain fatty acids elongation cycle. This endoplasmic reticulum-bound enzymatic process, allows the addition of two carbons to the chain of long- and very long-chain fatty acids/VLCFAs per cycle. This enzyme catalyzes the dehydration of the 3-hydroxyacyl-CoA intermediate into trans-2,3-enoyl-CoA, within each cycle of fatty acid elongation. Thereby, it participates in the production of VLCFAs of different chain lengths that are involved in multiple biological processes as precursors of membrane lipids and lipid mediators. This Xenopus laevis (African clawed frog) protein is Very-long-chain (3R)-3-hydroxyacyl-CoA dehydratase.